A 330-amino-acid polypeptide reads, in one-letter code: D-alanine--D-alanine ligase (330 aa).

One can recognise an ATP-grasp domain in the interval 120–326 (KLWLSALDIP…FKQFLEGIIR (207 aa)). 150 to 205 (AFRNWGAVFVKAASQGSSVGCYKVTDAAKLSEAVNAAFGYSDQVLVEKAVRPRELE) contributes to the ATP binding site. Mg(2+) is bound by residues Asp-280, Glu-293, and Asn-295.

It belongs to the D-alanine--D-alanine ligase family. It depends on Mg(2+) as a cofactor. Requires Mn(2+) as cofactor.

The protein resides in the cytoplasm. The enzyme catalyses 2 D-alanine + ATP = D-alanyl-D-alanine + ADP + phosphate + H(+). It participates in cell wall biogenesis; peptidoglycan biosynthesis. Its function is as follows. Cell wall formation. The chain is D-alanine--D-alanine ligase from Tolumonas auensis (strain DSM 9187 / NBRC 110442 / TA 4).